The sequence spans 569 residues: Arginine--tRNA ligase (569 aa).

The 'HIGH' region signature appears at 123–133; it reads ANPNGPLHVGH.

The protein belongs to the class-I aminoacyl-tRNA synthetase family.

It is found in the cytoplasm. The enzyme catalyses tRNA(Arg) + L-arginine + ATP = L-arginyl-tRNA(Arg) + AMP + diphosphate. This is Arginine--tRNA ligase from Methanosarcina barkeri (strain Fusaro / DSM 804).